The sequence spans 440 residues: Deoxyguanosinetriphosphate triphosphohydrolase-like protein (440 aa).

The 196-residue stretch at 61–256 (RLIHSLEVSC…MEAADDLCYS (196 aa)) folds into the HD domain.

The protein belongs to the dGTPase family. Type 3 subfamily.

The chain is Deoxyguanosinetriphosphate triphosphohydrolase-like protein from Synechocystis sp. (strain ATCC 27184 / PCC 6803 / Kazusa).